The following is a 233-amino-acid chain: Small ribosomal subunit protein uS2c (233 aa).

It belongs to the universal ribosomal protein uS2 family.

Its subcellular location is the plastid. It is found in the chloroplast. This chain is Small ribosomal subunit protein uS2c (rps2), found in Staurastrum punctulatum (Green alga).